The following is a 233-amino-acid chain: uncharacterized protein (233 aa).

Basic residues predominate over residues 1–10 (MSSKLSKKKL). A disordered region spans residues 1–90 (MSSKLSKKKL…KRQKGKNNDR (90 aa)). The segment covering 11-56 (KSLEYRSKKFDKKSQSLEEHEKKVQQKNEELEKKAADKISRDELPE) has biased composition (basic and acidic residues). Residues 76–85 (KTLKSKRQKG) are compositionally biased toward basic residues. Positions 92–171 (VILFVGNLPK…RKINIELTAG (80 aa)) constitute an RRM domain. Basic and acidic residues-rich tracts occupy residues 194–216 (MRQRVASEEQQAGEEKMARKAVA) and 224–233 (IHPDRLRLLQ). A disordered region spans residues 194 to 233 (MRQRVASEEQQAGEEKMARKAVADEGLESGIHPDRLRLLQ).

The protein resides in the nucleus. It localises to the nucleolus. This is an uncharacterized protein from Schizosaccharomyces pombe (strain 972 / ATCC 24843) (Fission yeast).